The following is a 396-amino-acid chain: MGKEKFQRNKPHCNIGTIGHVDHGKTSLTAAITKVLAETGGATYTAYDQIDKAPEEKARGITISTAHVEYETKKRHYAHVDCPGHADYVKNMITGAAQMDGAILVVSAADGPMPQTREHILLARQVGVPALVVFMNKVDMVDDAELLELVELEVRELLSKYDFPGDDIPITKGSALCALEGKQPEIGHDAVLALMDTVDAYIPQPERPIDLPFLMPVEDVFSISGRGTVVTGRVERGIVKVGEEIEIVGLKPTVKTVVTGVEMFRKLLDQGQAGDNIGALLRGTKREDVERGQVLCKPGSVKPHTKFKAEAYILTKDEGGRHTPFFTNYRPQFYFRTTDVTGVVTLPEGTEMVMPGDNVTMDVELIAPIAMEEKLRFAIREGGRTVGAGVVASITE.

A tr-type G domain is found at 10-206; that stretch reads KPHCNIGTIG…TVDAYIPQPE (197 aa). Residues 19 to 26 are G1; it reads GHVDHGKT. 19–26 is a GTP binding site; it reads GHVDHGKT. A Mg(2+)-binding site is contributed by Thr26. Residues 60-64 are G2; that stretch reads GITIS. The tract at residues 81–84 is G3; the sequence is DCPG. Residues 81 to 85 and 136 to 139 contribute to the GTP site; these read DCPGH and NKVD. The segment at 136–139 is G4; that stretch reads NKVD. Residues 174–176 are G5; the sequence is SAL.

This sequence belongs to the TRAFAC class translation factor GTPase superfamily. Classic translation factor GTPase family. EF-Tu/EF-1A subfamily. As to quaternary structure, monomer.

The protein resides in the cytoplasm. It carries out the reaction GTP + H2O = GDP + phosphate + H(+). GTP hydrolase that promotes the GTP-dependent binding of aminoacyl-tRNA to the A-site of ribosomes during protein biosynthesis. The chain is Elongation factor Tu from Methylocella silvestris (strain DSM 15510 / CIP 108128 / LMG 27833 / NCIMB 13906 / BL2).